Reading from the N-terminus, the 1250-residue chain is DNA topoisomerase 3-alpha (1250 aa).

Positions 27–171 (KYLNVAEKND…NISVYRATFS (145 aa)) constitute a Toprim domain. The Topo IA-type catalytic domain occupies 189-610 (DKRQSDAVDV…EQIAKYKQAY (422 aa)). Tyr356 functions as the O-(5'-phospho-DNA)-tyrosine intermediate in the catalytic mechanism. Over residues 769–835 (RGGGGGPGPG…GTGGGGLGGG (67 aa)) the composition is skewed to gly residues. 2 disordered regions span residues 769–899 (RGGG…GLDE) and 953–1035 (NGGT…TVLC). A compositionally biased stretch (basic and acidic residues) spans 840–865 (PGGESKKSATKKPPNEPKPKKTKEPK). A compositionally biased stretch (low complexity) spans 866–886 (AAPNKKTSSKSSGSIRSFFTS). Over residues 956 to 965 (TMPTESNGDQ) the composition is skewed to polar residues. Composition is skewed to basic and acidic residues over residues 966–994 (QLDK…RERA) and 1012–1021 (PRWDSVERDS). Positions 1022 to 1033 (TPPSSVPESETV) are enriched in low complexity. 4 residues coordinate Zn(2+): Cys1035, Cys1038, Cys1061, and Cys1067. The segment at 1035 to 1076 (CTGCQQPARQNTVRKNGPNLGRLYYKCPKPDECNFFQWADEP) adopts a GRF-type 1 zinc-finger fold. The interval 1069–1150 (FFQWADEPPS…TATPGDGEEV (82 aa)) is disordered. Positions 1079 to 1101 (SAKSKNSTGSAPQSTTSWGSNRV) are enriched in polar residues. A compositionally biased stretch (low complexity) spans 1106–1134 (SIQQSNSQRGQSSMRSNSSSTVTITQTKT). Residues Cys1152, Cys1154, Cys1177, and Cys1184 each coordinate Zn(2+). The GRF-type 2 zinc-finger motif lies at 1152–1193 (CNCGQLASQLTVRKDGPNQGRPFYACPTREKSCGFFKWGDED). The tract at residues 1188–1231 (KWGDEDQNQGASSTSWGSANRNPPGRSQPTAITSDGPKTRRCGL) is disordered. The span at 1195-1220 (NQGASSTSWGSANRNPPGRSQPTAIT) shows a compositional bias: polar residues.

This sequence belongs to the type IA topoisomerase family.

It catalyses the reaction ATP-independent breakage of single-stranded DNA, followed by passage and rejoining.. Releases the supercoiling and torsional tension of DNA introduced during the DNA replication and transcription by transiently cleaving and rejoining one strand of the DNA duplex. Introduces a single-strand break via transesterification at a target site in duplex DNA. The scissile phosphodiester is attacked by the catalytic tyrosine of the enzyme, resulting in the formation of a DNA-(5'-phosphotyrosyl)-enzyme intermediate and the expulsion of a 3'-OH DNA strand. The free DNA strand than undergoes passage around the unbroken strand thus removing DNA supercoils. Finally, in the religation step, the DNA 3'-OH attacks the covalent intermediate to expel the active-site tyrosine and restore the DNA phosphodiester backbone. Weakly relaxes negative supercoils and displays a distinct preference for binding single-stranded DNA. This is DNA topoisomerase 3-alpha (Top3alpha) from Drosophila melanogaster (Fruit fly).